Here is a 339-residue protein sequence, read N- to C-terminus: Uroporphyrinogen decarboxylase (339 aa).

Substrate-binding positions include 21–25 (RQAGR), D71, Y146, S201, and H316.

The protein belongs to the uroporphyrinogen decarboxylase family. In terms of assembly, homodimer.

It localises to the cytoplasm. It catalyses the reaction uroporphyrinogen III + 4 H(+) = coproporphyrinogen III + 4 CO2. It participates in porphyrin-containing compound metabolism; protoporphyrin-IX biosynthesis; coproporphyrinogen-III from 5-aminolevulinate: step 4/4. Functionally, catalyzes the decarboxylation of four acetate groups of uroporphyrinogen-III to yield coproporphyrinogen-III. The protein is Uroporphyrinogen decarboxylase of Rickettsia canadensis (strain McKiel).